Here is a 134-residue protein sequence, read N- to C-terminus: MVNDIIADSITRIRNASIRGQEVTKLLYSKIVEAIVKILQEKGYIESYKVVEEGNKKFINVVLKYEEAGKKKRPVINEIKRISKPGRRIYKGKDEIKRFKNGYGTIIVSTSKGVLPNDEAYRLGVGGEVLCSVW.

The protein belongs to the universal ribosomal protein uS8 family. In terms of assembly, part of the 30S ribosomal subunit. Contacts proteins S5 and S12.

Functionally, one of the primary rRNA binding proteins, it binds directly to 16S rRNA central domain where it helps coordinate assembly of the platform of the 30S subunit. The protein is Small ribosomal subunit protein uS8 of Nitratiruptor sp. (strain SB155-2).